The following is a 145-amino-acid chain: Protein phosphatase 1 regulatory subunit 14D (145 aa).

Low complexity predominate over residues 1–14; sequence MLSSSPASCTSPSP. Positions 1–59 are disordered; that stretch reads MLSSSPASCTSPSPDGENPCKKVHWASGRRRTSSTDSESKSHPDSSKIPRSRRPSRLTV. Positions 21–25 are interaction with protein phosphatase 1; that stretch reads KKVHW. The segment covering 21 to 32 has biased composition (basic residues); it reads KKVHWASGRRRT. Over residues 37-47 the composition is skewed to basic and acidic residues; the sequence is SESKSHPDSSK. The residue at position 58 (threonine 58) is a Phosphothreonine.

The protein belongs to the PP1 inhibitor family. In terms of processing, phosphorylated on several residues. In terms of tissue distribution, detected in colon, intestine, kidney and brain cortex.

It localises to the cytoplasm. Its function is as follows. Inhibitor of PPP1CA. Has inhibitory activity only when phosphorylated, creating a molecular switch for regulating the phosphorylation status of PPP1CA substrates and smooth muscle contraction. In Homo sapiens (Human), this protein is Protein phosphatase 1 regulatory subunit 14D (PPP1R14D).